We begin with the raw amino-acid sequence, 1501 residues long: Pleiotropic ABC efflux transporter of multiple drugs CDR1 (1501 aa).

The disordered stretch occupies residues 1–30 (MSDSKMSSQDESKLEKAISQDSSSENHSIN). Over 1 to 513 (MSDSKMSSQD…NFLRMKGDPS (513 aa)) the chain is Cytoplasmic. The segment at 2-512 (SDSKMSSQDE…RNFLRMKGDP (511 aa)) is NBD1. Basic and acidic residues predominate over residues 8–18 (SQDESKLEKAI). The ABC transporter 1 domain maps to 150 to 404 (LATEGFRHFQ…FEKMGWKCPQ (255 aa)). A helical transmembrane segment spans residues 514–534 (IPIFSVFGQLVMGLILSSVFY). The Extracellular segment spans residues 535–548 (NLSQTTGSFYYRGA). Residues 549-569 (AMFFAVLFNAFSSLLEIMSLF) traverse the membrane as a helical segment. At 570–597 (EARPIVEKHKKYALYRPSADALASIISE) the chain is on the cytoplasmic side. The chain crosses the membrane as a helical span at residues 598–618 (LPVKLAMSMSFNFVFYFMVNF). Topologically, residues 619–622 (RRNP) are extracellular. Residues 623 to 643 (GRFFFYWLMCIWCTFVMSHLF) traverse the membrane as a helical segment. Over 644 to 654 (RSIGAVSTSIS) the chain is Cytoplasmic. A helical transmembrane segment spans residues 655–675 (GAMTPATVLLLAMVIYTGFVI). The Extracellular segment spans residues 676–764 (PTPSMLGWSR…QYYNSHKWRN (89 aa)). Residues 765 to 785 (LGITIGFAVFFLAIYIALTEF) traverse the membrane as a helical segment. Residues 786–1195 (NKGAMQKGEI…TIVQDWRSPG (410 aa)) are Cytoplasmic-facing. The NBD2 stretch occupies residues 786–1195 (NKGAMQKGEI…TIVQDWRSPG (410 aa)). Positions 859–1103 (FFWRDLTYQV…MINYFEKYGA (245 aa)) constitute an ABC transporter 2 domain. 895-902 (GASGAGKT) lines the ATP pocket. The stretch at 1137 to 1164 (RNSSEYQAVREEINRMEAELSKLPRDND) forms a coiled coil. A helical membrane pass occupies residues 1196–1216 (YIYSKIFLVVSAALFNGFSFF). The Extracellular portion of the chain corresponds to 1217–1229 (KAKNNMQGLQNQM). The chain crosses the membrane as a helical span at residues 1230 to 1250 (FSVFMFFIPFNTLVQQMLPYF). At 1251–1280 (VKQRDVYEVREAPSRTFSWFAFIAGQITSE) the chain is on the cytoplasmic side. The helical transmembrane segment at 1281 to 1301 (IPYQVAVGTIAFFCWYYPLGL) threads the bilayer. The Extracellular segment spans residues 1302 to 1314 (YNNATPTDSVNPR). The helical transmembrane segment at 1315-1335 (GVLMWMLVTAFYVYTATMGQL) threads the bilayer. The Cytoplasmic segment spans residues 1336–1355 (CMSFSELADNAANLATLLFT). A helical membrane pass occupies residues 1356 to 1376 (MCLNFCGVLAGPDVLPGFWIF). Over 1377 to 1466 (MYRCNPFTYL…NSLYSERWRN (90 aa)) the chain is Extracellular. The helical transmembrane segment at 1467-1487 (FGIFIAFIAINIILTVIFYWL) threads the bilayer. Residues 1488–1501 (ARVPKGNREKKNKK) are Cytoplasmic-facing.

The protein belongs to the ABC transporter superfamily.

It localises to the cell membrane. With respect to regulation, disulfiram reverses CDR1-mediated drug resistance by interaction with both ATP and substrate-binding sites of the transporter and may be useful for antifungal therapy. Functionally, pleiotropic ABC efflux transporter that confers resistance to numerous chemicals including anisomycin, cycloheximide, fluconazole, miconazole, ketoconazole, itriconazole, nystatin, terbinafine, amorolfine, brefeldin A, amphotericin B, fluphenazine, as well as estrogen. Plays a role in farnesol-induced apoptotic process through glutathione efflux activity. Mediates in-to-out translocation of membrane phospholipids including aminophospholipids and thus regulates asymmetric distribution of phosphatidylethanolamine. Exhibits nucleoside triphosphatase activity. This is Pleiotropic ABC efflux transporter of multiple drugs CDR1 (CDR1) from Candida albicans (strain SC5314 / ATCC MYA-2876) (Yeast).